The primary structure comprises 106 residues: MSSNIAVVGDRDTVTGFRLGGVREGYVVETPDEAEETIRNLIRDGFSIIIVTEKIGDELREFIEETTSSSALPMIIEIPDKTGPSERETDPLRDLIKRVIGVEMVK.

This sequence belongs to the V-ATPase F subunit family. As to quaternary structure, has multiple subunits with at least A(3), B(3), C, D, E, F, H, I and proteolipid K(x).

Its subcellular location is the cell membrane. In terms of biological role, component of the A-type ATP synthase that produces ATP from ADP in the presence of a proton gradient across the membrane. The sequence is that of A-type ATP synthase subunit F from Methanothermobacter thermautotrophicus (strain ATCC 29096 / DSM 1053 / JCM 10044 / NBRC 100330 / Delta H) (Methanobacterium thermoautotrophicum).